The following is a 318-amino-acid chain: 1-phosphofructokinase (318 aa).

ATP-binding positions include 228-233 (SMGTEG) and 259-260 (GD). Catalysis depends on Asp-260, which acts as the Proton acceptor.

It belongs to the carbohydrate kinase PfkB family.

It carries out the reaction beta-D-fructose 1-phosphate + ATP = beta-D-fructose 1,6-bisphosphate + ADP + H(+). Catalyzes the ATP-dependent phosphorylation of fructose-l-phosphate to fructose-l,6-bisphosphate. This is 1-phosphofructokinase from Xanthomonas campestris pv. campestris (strain ATCC 33913 / DSM 3586 / NCPPB 528 / LMG 568 / P 25).